The sequence spans 259 residues: Activator of lactoyl-CoA dehydratase (259 aa).

The [4Fe-4S] cluster site is built by Cys125 and Cys164.

Homodimer. It depends on [4Fe-4S] cluster as a cofactor.

Functionally, required for the activation of lactoyl-CoA dehydratase. This protein is extremely sensitive towards oxygen. The sequence is that of Activator of lactoyl-CoA dehydratase (lcdC) from Anaerotignum propionicum (Clostridium propionicum).